The chain runs to 491 residues: MPGLLVAGTTSDAGKSTLTAGLCRAFARRGVRVAPFKAQNMSNNSMVCQGPGGAGVEIGRAQWVQALAANATPEAAMNPVLLKPGSDHRSHVVLMGRSWGELASSNWFEGRQVLADTAHRAFDDLAARYDVVVAEGAGSPAEINLRAGDYVNMGLARHAELPTIVVGDIDRGGVFAAFFGTIALLSVEDQALVAGFVVNKFRGDLDLLAPGLRDLERVTGRQVFGTLPWHADLWLDSEDALDLTGRRAASAGAHRVAVVRLPRISNFTDVDALGLEPDLDVVFASDPRGLGDADLIVVPGTRATIADLAWLRARGLDRALMAHVAAGKPLLGICGGFQMLGRVIRDPDGVEGPVAEADGLGLLDVETTFGAEKVLRLPRGQGLGVTASGYEIHHGRITAGDAAQQFLGGARDGQVFGTMWHGSLEGDALREAFLRETLGLTESGTSFSAARERRLDLLGDLVERHLDVDALLALARHGCAPALPFLPPGAP.

One can recognise a GATase cobBQ-type domain in the interval 253–429 (AHRVAVVRLP…WHGSLEGDAL (177 aa)). Cys-334 serves as the catalytic Nucleophile. His-421 is an active-site residue.

The protein belongs to the CobB/CobQ family. CobQ subfamily.

It participates in cofactor biosynthesis; adenosylcobalamin biosynthesis. In terms of biological role, catalyzes amidations at positions B, D, E, and G on adenosylcobyrinic A,C-diamide. NH(2) groups are provided by glutamine, and one molecule of ATP is hydrogenolyzed for each amidation. The protein is Cobyric acid synthase of Mycobacterium ulcerans (strain Agy99).